The chain runs to 838 residues: MVPLLPLYALLLLFLCDINPANANSYYDKVLAHSRIRGRDQGPNVCALQQILGTKKKYFSSCKNWYQGAICGKKTTVLYECCPGYMRMEGMKGCPAVMPIDHVYGTLGIVGATTTQHYSDVSKLREEIEGKGSYTYFAPSNEAWENLDSDIRRGLENNVNVELLNALHSHMVNKRMLTKDLKHGMVIPSMYNNLGLFINHYPNGVVTVNCARVIHGNQIATNGVVHVIDRVLTQIGTSIQDFLEAEDDLSSFRAAAITSDLLESLGRDGHFTLFAPTNEAFEKLPRGVLERIMGDKVASEALMKYHILNTLQCSEAITGGAVFETMEGNTIEIGCEGDSISINGIKMVNKKDIVTKNGVIHLIDEVLIPDSAKQVIELAGKQQTTFTDLVAQLGLASSLKPDGEYTLLAPVNNAFSDDTLSMDQRLLKLILQNHILKVKVGLSDLYNGQILETIGGKQLRVFVYRTAICIENSCMVRGSKQGRNGAIHIFREIIQPAEKSLHDKLRQDKRFSIFLSLLEAADLKDLLTQPGDWTLFAPTNDAFKGMTSEERELLIGDKNALQNIILYHLTPGVYIGKGFEPGVTNILKTTQGSKIYLKGVNETLLVNELKSKESDIMTTNGVIHVVDKLLYPADIPVGNDQLLELLNKLIKYIQIKFVRGSTFKEIPMTVYTTKIITKVVEPKIKVIQGSLQPIIKTEGPAMTKIQIEGDPDFRLIKEGETVTEVIHGEPVIKKYTKIIDGVPVEITEKQTREERIITGPEIKYTRISTGGGETGETLQKFLQKEVSKVTKFIEGGDGHLFEDEEIKRLLQGDTPAKKIPANKRVQGPRRRSREGRSQ.

The signal sequence occupies residues 1-23 (MVPLLPLYALLLLFLCDINPANA). Residues 42-96 (GPNVCALQQILGTKKKYFSSCKNWYQGAICGKKTTVLYECCPGYMRMEGMKGCPA) enclose the EMI domain. Disulfide bonds link cysteine 46-cysteine 82, cysteine 71-cysteine 335, cysteine 81-cysteine 94, cysteine 210-cysteine 313, and cysteine 469-cysteine 474. Cysteine 62 carries the post-translational modification S-cysteinyl cysteine. 4 consecutive FAS1 domains span residues 99 to 232 (PIDH…DRVL), 236 to 367 (GTSI…DEVL), 370 to 494 (DSAK…REII), and 498 to 630 (EKSL…DKLL). Asparagine 601 carries an N-linked (GlcNAc...) asparagine glycan. Residues 811–838 (QGDTPAKKIPANKRVQGPRRRSREGRSQ) are disordered. A compositionally biased stretch (basic residues) spans 826–838 (QGPRRRSREGRSQ).

In terms of assembly, homodimer. Interacts with BMP1 and fibronectin. Gamma-carboxylation is controversial. Gamma-carboxyglutamated; gamma-carboxyglutamate residues are formed by vitamin K dependent carboxylation; these residues may be required for binding to calcium. According to a more recent report in human, does not contain vitamin K-dependent gamma-carboxyglutamate residues. In terms of tissue distribution, preferentially expressed in periosteum and periodontal ligament. Also expressed in the developing and adult heart.

The protein localises to the golgi apparatus. It localises to the secreted. The protein resides in the extracellular space. It is found in the extracellular matrix. In terms of biological role, induces cell attachment and spreading and plays a role in cell adhesion. Enhances incorporation of BMP1 in the fibronectin matrix of connective tissues, and subsequent proteolytic activation of lysyl oxidase LOX. This Mus musculus (Mouse) protein is Periostin (Postn).